Reading from the N-terminus, the 85-residue chain is Small cysteine and glycine repeat-containing protein 5 (85 aa).

The tract at residues 4 to 69 (CGCGGCGGCG…TCCSCGCGCG (66 aa)) is 10 X 2 AA repeats of CG.

It belongs to the KRTAP type 28 family.

Its function is as follows. In the hair cortex, hair keratin intermediate filaments are embedded in an interfilamentous matrix, consisting of hair keratin-associated proteins (KRTAP), which are essential for the formation of a rigid and resistant hair shaft through their extensive disulfide bond cross-linking with abundant cysteine residues of hair keratins. The matrix proteins include the high-sulfur and high-glycine-tyrosine keratins. The polypeptide is Small cysteine and glycine repeat-containing protein 5 (Homo sapiens (Human)).